A 387-amino-acid chain; its full sequence is SLC2A4 regulator (387 aa).

Disordered stretches follow at residues 1–97 (MERP…RATP) and 139–179 (EALV…PPEA). Positions 27-36 (GPGPRAAPVT) are enriched in low complexity. Residues 200–225 (FQCLWKSCGKVLSTASAMQRHIRLVH) form a C2H2-type zinc finger. A Nuclear export signal motif is present at residues 253 to 263 (LTDGLSSLTPV). Residues serine 264 and serine 268 each carry the phosphoserine modification. The segment at 283 to 305 (EPPALPSPLRPPAPPLPPPPVLS) is disordered. Over residues 285 to 303 (PALPSPLRPPAPPLPPPPV) the composition is skewed to pro residues. A Nuclear localization signal motif is present at residues 351–354 (RKPR).

In terms of assembly, interacts with MEF2A. In terms of tissue distribution, according to PubMed:14630949, expressed in heart, skeletal muscle, liver, kidney and pancreas; undetectable in lung, placenta or brain. According to PubMed:14625278, ubiquitously expressed, with lowest expression in brain and ileum.

It is found in the cytoplasm. It localises to the nucleus. Its function is as follows. Transcription factor involved in SLC2A4 and HD gene transactivation. Binds to the consensus sequence 5'-GCCGGCG-3'. The protein is SLC2A4 regulator (SLC2A4RG) of Homo sapiens (Human).